The chain runs to 361 residues: Mannose-1-phosphate guanyltransferase 2 (361 aa).

The protein belongs to the transferase hexapeptide repeat family.

The protein localises to the cytoplasm. The enzyme catalyses alpha-D-mannose 1-phosphate + GTP + H(+) = GDP-alpha-D-mannose + diphosphate. The protein operates within nucleotide-sugar biosynthesis; GDP-alpha-D-mannose biosynthesis; GDP-alpha-D-mannose from alpha-D-mannose 1-phosphate (GTP route): step 1/1. Its function is as follows. Involved in cell wall synthesis where it is required for glycosylation. Involved in cell cycle progression through cell-size checkpoint. In Candida glabrata (strain ATCC 2001 / BCRC 20586 / JCM 3761 / NBRC 0622 / NRRL Y-65 / CBS 138) (Yeast), this protein is Mannose-1-phosphate guanyltransferase 2 (MPG1).